The chain runs to 123 residues: Small ribosomal subunit protein uS12c (123 aa).

This sequence belongs to the universal ribosomal protein uS12 family. As to quaternary structure, part of the 30S ribosomal subunit.

Its subcellular location is the plastid. It localises to the chloroplast. In terms of biological role, with S4 and S5 plays an important role in translational accuracy. Located at the interface of the 30S and 50S subunits. This chain is Small ribosomal subunit protein uS12c (rps12), found in Marchantia polymorpha (Common liverwort).